A 396-amino-acid polypeptide reads, in one-letter code: Metacaspase-1 (396 aa).

Positions 1-20 are enriched in gly residues; sequence MSGYPGQGYQGQGYGQGYGQ. The tract at residues 1–86 is disordered; sequence MSGYPGQGYQ…PQGMQQFGHG (86 aa). A compositionally biased stretch (low complexity) spans 47 to 62; the sequence is HYQYGPPQGGYQYPPQ. The segment covering 72 to 81 has biased composition (polar residues); it reads QAHQPPQGMQ. Catalysis depends on residues H186 and C242.

The protein belongs to the peptidase C14B family.

Involved in cell death (apoptosis). This Pyricularia oryzae (strain 70-15 / ATCC MYA-4617 / FGSC 8958) (Rice blast fungus) protein is Metacaspase-1 (MCA1).